A 327-amino-acid chain; its full sequence is tRNA dimethylallyltransferase (327 aa).

18–25 is an ATP binding site; sequence GPTASGKT. Position 20–25 (20–25) interacts with substrate; that stretch reads TASGKT. 3 interaction with substrate tRNA regions span residues 43-46, 167-171, and 251-256; these read DSAL, QRVQR, and RCVGYR.

This sequence belongs to the IPP transferase family. In terms of assembly, monomer. Requires Mg(2+) as cofactor.

It catalyses the reaction adenosine(37) in tRNA + dimethylallyl diphosphate = N(6)-dimethylallyladenosine(37) in tRNA + diphosphate. In terms of biological role, catalyzes the transfer of a dimethylallyl group onto the adenine at position 37 in tRNAs that read codons beginning with uridine, leading to the formation of N6-(dimethylallyl)adenosine (i(6)A). The chain is tRNA dimethylallyltransferase from Methylibium petroleiphilum (strain ATCC BAA-1232 / LMG 22953 / PM1).